Here is a 309-residue protein sequence, read N- to C-terminus: Tagatose-6-phosphate kinase (309 aa).

It belongs to the carbohydrate kinase PfkB family. LacC subfamily.

The enzyme catalyses D-tagatofuranose 6-phosphate + ATP = D-tagatofuranose 1,6-bisphosphate + ADP + H(+). Its pathway is carbohydrate metabolism; D-tagatose 6-phosphate degradation; D-glyceraldehyde 3-phosphate and glycerone phosphate from D-tagatose 6-phosphate: step 1/2. The sequence is that of Tagatose-6-phosphate kinase from Streptococcus pneumoniae (strain ATCC 700669 / Spain 23F-1).